The primary structure comprises 387 residues: Formate-dependent phosphoribosylglycinamide formyltransferase (387 aa).

N(1)-(5-phospho-beta-D-ribosyl)glycinamide is bound by residues E12–L13 and E72. Residues R104, K145, S150–Q155, E185–I188, and E193 contribute to the ATP site. Residues D109–L300 form the ATP-grasp domain. Residues E258 and E270 each coordinate Mg(2+). Residues D277, K348, and R355–R356 contribute to the N(1)-(5-phospho-beta-D-ribosyl)glycinamide site.

This sequence belongs to the PurK/PurT family. As to quaternary structure, homodimer.

It carries out the reaction N(1)-(5-phospho-beta-D-ribosyl)glycinamide + formate + ATP = N(2)-formyl-N(1)-(5-phospho-beta-D-ribosyl)glycinamide + ADP + phosphate + H(+). Its pathway is purine metabolism; IMP biosynthesis via de novo pathway; N(2)-formyl-N(1)-(5-phospho-D-ribosyl)glycinamide from N(1)-(5-phospho-D-ribosyl)glycinamide (formate route): step 1/1. In terms of biological role, involved in the de novo purine biosynthesis. Catalyzes the transfer of formate to 5-phospho-ribosyl-glycinamide (GAR), producing 5-phospho-ribosyl-N-formylglycinamide (FGAR). Formate is provided by PurU via hydrolysis of 10-formyl-tetrahydrofolate. The polypeptide is Formate-dependent phosphoribosylglycinamide formyltransferase (Leptospira borgpetersenii serovar Hardjo-bovis (strain JB197)).